A 121-amino-acid chain; its full sequence is MNNAPHLYFAWQQLVEKSQLMLRLATEEQWDELIASEMAYVNAVQEIAHLTEEVAPSTTMQEQLRPMLRLILDNESKVKQLLQIRMDELAKLVGQSSVQKSVLSAYGDQGGFVLAPQDNLF.

The required for homodimerization stretch occupies residues 1 to 50; that stretch reads MNNAPHLYFAWQQLVEKSQLMLRLATEEQWDELIASEMAYVNAVQEIAHL. The fliD binding stretch occupies residues 60–98; sequence MQEQLRPMLRLILDNESKVKQLLQIRMDELAKLVGQSSV.

This sequence belongs to the FliT family. In terms of assembly, homodimer. Interacts with FliD and FlhC.

The protein localises to the cytoplasm. It is found in the cytosol. Dual-function protein that regulates the transcription of class 2 flagellar operons and that also acts as an export chaperone for the filament-capping protein FliD. As a transcriptional regulator, acts as an anti-FlhDC factor; it directly binds FlhC, thus inhibiting the binding of the FlhC/FlhD complex to class 2 promoters, resulting in decreased expression of class 2 flagellar operons. As a chaperone, effects FliD transition to the membrane by preventing its premature polymerization, and by directing it to the export apparatus. The protein is Flagellar protein FliT of Escherichia coli O9:H4 (strain HS).